Consider the following 245-residue polypeptide: Ribosomal RNA large subunit methyltransferase E (245 aa).

5 residues coordinate S-adenosyl-L-methionine: G58, W60, D78, D96, and D123. K163 serves as the catalytic Proton acceptor.

It belongs to the class I-like SAM-binding methyltransferase superfamily. RNA methyltransferase RlmE family.

The protein resides in the cytoplasm. The enzyme catalyses uridine(2552) in 23S rRNA + S-adenosyl-L-methionine = 2'-O-methyluridine(2552) in 23S rRNA + S-adenosyl-L-homocysteine + H(+). Functionally, specifically methylates the uridine in position 2552 of 23S rRNA at the 2'-O position of the ribose in the fully assembled 50S ribosomal subunit. The sequence is that of Ribosomal RNA large subunit methyltransferase E from Methanocaldococcus jannaschii (strain ATCC 43067 / DSM 2661 / JAL-1 / JCM 10045 / NBRC 100440) (Methanococcus jannaschii).